The following is a 569-amino-acid chain: Laccase-6 (569 aa).

The N-terminal stretch at Met-1–Ala-29 is a signal peptide. Plastocyanin-like domains follow at residues Lys-37 to Ser-153 and Asn-163 to Ala-315. The N-linked (GlcNAc...) asparagine glycan is linked to Asn-83. The Cu cation site is built by His-87, His-89, His-132, and His-134. Residues Asn-208, Asn-303, Asn-319, Asn-392, Asn-438, and Asn-444 are each glycosylated (N-linked (GlcNAc...) asparagine). Positions Asp-417–Lys-553 constitute a Plastocyanin-like 3 domain. His-472, His-475, His-477, His-532, Cys-533, His-534, His-538, and Met-543 together coordinate Cu cation.

This sequence belongs to the multicopper oxidase family. Cu cation is required as a cofactor. Predominantly expressed in the inflorescence stem, but not in siliques.

It localises to the secreted. Its subcellular location is the extracellular space. The protein resides in the apoplast. It carries out the reaction 4 hydroquinone + O2 = 4 benzosemiquinone + 2 H2O. Functionally, lignin degradation and detoxification of lignin-derived products. The sequence is that of Laccase-6 (LAC6) from Arabidopsis thaliana (Mouse-ear cress).